The primary structure comprises 505 residues: Kinesin light chain 3 (505 aa).

Residues Met1–Pro20 are disordered. Residues Ala90–Leu150 adopt a coiled-coil conformation. The tract at residues Arg154–Gln197 is disordered. Positions Glu161 to Ser173 are enriched in basic and acidic residues. Ser173 carries the phosphoserine modification. 5 TPR repeats span residues Leu207 to Ser240, Ala249 to Thr282, Ala291 to Val324, Ala333 to Leu366, and Ala375 to Pro408. The tract at residues Ala409 to Ser439 is disordered. Positions Glu421–Ser434 are enriched in polar residues. Ser467 carries the post-translational modification Phosphoserine. Residues Gln486–Arg505 form a disordered region. At Thr499 the chain carries Phosphothreonine. Ser503 is modified (phosphoserine).

The protein belongs to the kinesin light chain family. Oligomer composed of two heavy chains and two light chains. Associates with microtubulin in an ATP-dependent manner. Interacts with KIF5C. Interacts with ODF1. Interacts with LRGUK. Interacts with VDAC2. As to expression, expressed in postmeiotic male germ cells (at protein level).

It is found in the cytoplasm. The protein localises to the cytoskeleton. Its subcellular location is the mitochondrion. Functionally, kinesin is a microtubule-associated force-producing protein that may play a role in organelle transport. Plays a role during spermiogenesis in the development of the sperm tail midpiece and in the normal function of spermatozoa. May play a role in the formation of the mitochondrial sheath formation in the developing spermatid midpiece. The protein is Kinesin light chain 3 (Klc3) of Rattus norvegicus (Rat).